The chain runs to 121 residues: Large ribosomal subunit protein bL12 (121 aa).

This sequence belongs to the bacterial ribosomal protein bL12 family. In terms of assembly, homodimer. Part of the ribosomal stalk of the 50S ribosomal subunit. Forms a multimeric L10(L12)X complex, where L10 forms an elongated spine to which 2 to 4 L12 dimers bind in a sequential fashion. Binds GTP-bound translation factors.

Functionally, forms part of the ribosomal stalk which helps the ribosome interact with GTP-bound translation factors. Is thus essential for accurate translation. In Streptococcus suis (strain 98HAH33), this protein is Large ribosomal subunit protein bL12.